The sequence spans 793 residues: Tripartite terminase subunit 1 (793 aa).

The segment at 206 to 234 (CSVCFEELCVTANSGDSTHKRIVRKICDH) adopts a C3H1-type zinc-finger fold. 697-704 (FSSVFKCG) serves as a coordination point for ATP.

Belongs to the herpesviridae TRM1 protein family. Associates with TRM2 and TRM3 to form the tripartite terminase complex. Interacts with portal protein.

The protein resides in the host nucleus. Its function is as follows. Component of the molecular motor that translocates viral genomic DNA in empty capsid during DNA packaging. Forms a tripartite terminase complex together with TRM2 and TRM3 in the host cytoplasm. Once the complex reaches the host nucleus, it interacts with the capsid portal vertex. This portal forms a ring in which genomic DNA is translocated into the capsid. TRM1 carries an endonuclease activity that plays an important role for the cleavage of concatemeric viral DNA into unit length genomes. The protein is Tripartite terminase subunit 1 of Gallid herpesvirus 2 (strain Chicken/Md5/ATCC VR-987) (GaHV-2).